The sequence spans 231 residues: NADH-ubiquinone oxidoreductase chain 4 (231 aa).

6 helical membrane passes run 1-21 (PIAG…YGII), 34-54 (MFIP…LTCL), 63-85 (IAYS…TPWG), 89-111 (AMAL…NTTY), 128-148 (ILPM…AMPP), and 169-189 (TIIM…HMFL).

This sequence belongs to the complex I subunit 4 family.

The protein localises to the mitochondrion membrane. The enzyme catalyses a ubiquinone + NADH + 5 H(+)(in) = a ubiquinol + NAD(+) + 4 H(+)(out). Core subunit of the mitochondrial membrane respiratory chain NADH dehydrogenase (Complex I) that is believed to belong to the minimal assembly required for catalysis. Complex I functions in the transfer of electrons from NADH to the respiratory chain. The immediate electron acceptor for the enzyme is believed to be ubiquinone. This Lachesis muta muta (Bushmaster) protein is NADH-ubiquinone oxidoreductase chain 4 (MT-ND4).